We begin with the raw amino-acid sequence, 215 residues long: Ribonuclease T (215 aa).

The region spanning 20–194 is the Exonuclease domain; that stretch reads VVIDVETAGF…YDTMQTAKLF (175 aa). Positions 23, 25, 181, and 186 each coordinate Mg(2+). His-181 acts as the Proton donor/acceptor in catalysis.

This sequence belongs to the RNase T family. In terms of assembly, homodimer. It depends on Mg(2+) as a cofactor.

In terms of biological role, trims short 3' overhangs of a variety of RNA species, leaving a one or two nucleotide 3' overhang. Responsible for the end-turnover of tRNA: specifically removes the terminal AMP residue from uncharged tRNA (tRNA-C-C-A). Also appears to be involved in tRNA biosynthesis. This chain is Ribonuclease T, found in Yersinia enterocolitica serotype O:8 / biotype 1B (strain NCTC 13174 / 8081).